Reading from the N-terminus, the 100-residue chain is Probable DNA-binding protein HU (100 aa).

Belongs to the bacterial histone-like protein family.

Its function is as follows. Histone-like DNA-binding protein which is capable of wrapping DNA to stabilize it, and thus to prevent its denaturation under extreme environmental conditions. This chain is Probable DNA-binding protein HU (hup), found in Chlamydia pneumoniae (Chlamydophila pneumoniae).